Consider the following 901-residue polypeptide: Protein SOK1 (901 aa).

3 disordered regions span residues 1–87 (MDQP…QNII), 106–139 (RSSGVITPSMSLNASTNATNNDSSGNSANSSDLK), and 162–231 (NDDN…NASN). Low complexity predominate over residues 10 to 51 (PTTASNPAPSSTNSSSAPSATNSKQERSSSSLSKPSSVVPSK). Ser40 and Ser53 each carry phosphoserine. Polar residues-rich tracts occupy residues 74-87 (GDTSTLDGSSQNII) and 106-115 (RSSGVITPSM). Positions 116–138 (SLNASTNATNNDSSGNSANSSDL) are enriched in low complexity. 2 positions are modified to phosphoserine: Ser191 and Ser193. The span at 220–231 (AAQQQPPGNASN) shows a compositional bias: polar residues. The residue at position 245 (Ser245) is a Phosphoserine.

It belongs to the TCP11 family.

The protein localises to the nucleus. In terms of biological role, high copy suppressor of a cyclic AMP-dependent protein kinase mutant. The protein is Protein SOK1 (SOK1) of Saccharomyces cerevisiae (strain ATCC 204508 / S288c) (Baker's yeast).